The sequence spans 493 residues: MRIHSPYPASWALAQRIGYLYSEGEIIYLADTPFERLLDIQRQVGQCQTMTSLSQADFEARLEAVFHQNTGESQQIAQDIDQSVDLLSLSEEMPANEDLLNEDSAAPVIRLINAILSEAIKETASDIHIETYEKTMSIRFRIDGVLRTILQPNKKLAALLISRIKVMARLDIAEKRIPQDGRISLRIGRRNIDVRVSTLPSIYGERAVLRLLDKNSLQLSLNNLGMTAADKQDLENLIQLPHGIILVTGPTGSGKSTTLYAILSALNTPGRNILTVEDPVEYELEGIGQTQVNTRVDMSFARGLRAILRQDPDVVMVGEIRDTETAQIAVQASLTGHLVLSTLHTNSASGAVTRLRDMGVESFLLSSSLAGIIAQRLVRRLCPQCRQFTPVSPQQAQMFKYHQLAVTTIGTPVGCPHCHQSGYQGRMAIHEMMVVTPELRAAIHENVDEQALERLVRQQHKALIKNGLQKVISGDTSWDEVMRVASATLESEA.

249–256 (GPTGSGKS) serves as a coordination point for ATP. Residues C382, C385, C415, and C418 each coordinate Zn(2+).

It belongs to the GSP E family. As to quaternary structure, forms homooligomers; most probably hexamers. Interacts with GspL. It depends on Zn(2+) as a cofactor.

The protein resides in the cell inner membrane. The catalysed reaction is ATP + H2O + cellular proteinSide 1 = ADP + phosphate + cellular proteinSide 2.. Its function is as follows. ATPase component of the type II secretion system required for the energy-dependent secretion of extracellular factors such as proteases and toxins from the periplasm. Acts as a molecular motor to provide the energy that is required for assembly of the pseudopilus and the extrusion of substrates generated in the cytoplasm. The sequence is that of Putative type II secretion system protein E (gspE) from Escherichia coli (strain K12).